A 612-amino-acid polypeptide reads, in one-letter code: Methionine--tRNA ligase (612 aa).

A 'HIGH' region motif is present at residues 12-22 (PYANGPRHIGH). Cysteine 144, cysteine 147, cysteine 157, and cysteine 160 together coordinate Zn(2+). Residues 348-352 (KFSSS) carry the 'KMSKS' region motif. Serine 351 is an ATP binding site.

The protein belongs to the class-I aminoacyl-tRNA synthetase family. MetG type 1 subfamily. Monomer. The cofactor is Zn(2+).

It is found in the cytoplasm. The enzyme catalyses tRNA(Met) + L-methionine + ATP = L-methionyl-tRNA(Met) + AMP + diphosphate. Its function is as follows. Is required not only for elongation of protein synthesis but also for the initiation of all mRNA translation through initiator tRNA(fMet) aminoacylation. The protein is Methionine--tRNA ligase of Corynebacterium kroppenstedtii (strain DSM 44385 / JCM 11950 / CIP 105744 / CCUG 35717).